The following is an 814-amino-acid chain: Lon protease (814 aa).

The segment at 1 to 20 (MANEAHNIEHTDPEFRDDSA) is disordered. The 195-residue stretch at 25–219 (LPLLPVRDTV…KINQHLAKEL (195 aa)) folds into the Lon N-terminal domain. ATP is bound at residue 372 to 379 (GPPGVGKT). Residues 610-792 (TKRAGVVVGL…DEVLEIALPS (183 aa)) form the Lon proteolytic domain. Active-site residues include Ser-697 and Lys-740.

This sequence belongs to the peptidase S16 family. Homohexamer. Organized in a ring with a central cavity.

Its subcellular location is the cytoplasm. The catalysed reaction is Hydrolysis of proteins in presence of ATP.. Its function is as follows. ATP-dependent serine protease that mediates the selective degradation of mutant and abnormal proteins as well as certain short-lived regulatory proteins. Required for cellular homeostasis and for survival from DNA damage and developmental changes induced by stress. Degrades polypeptides processively to yield small peptide fragments that are 5 to 10 amino acids long. Binds to DNA in a double-stranded, site-specific manner. This Koribacter versatilis (strain Ellin345) protein is Lon protease.